A 215-amino-acid chain; its full sequence is uncharacterized protein (215 aa).

This is an uncharacterized protein from Archaeoglobus fulgidus (strain ATCC 49558 / DSM 4304 / JCM 9628 / NBRC 100126 / VC-16).